Consider the following 829-residue polypeptide: Probable methyltransferase PMT26 (829 aa).

Over 1–17 (MAQPRYTRIDNRRPSSN) the chain is Cytoplasmic. The helical; Signal-anchor for type II membrane protein transmembrane segment at 18–38 (YCSTVTVVVFVALCLVGIWMM) threads the bilayer. Residues 39 to 829 (TSSSVGPAQN…EVETLTYAIG (791 aa)) are Lumenal-facing. Positions 55–258 (DNKDGIKKQM…TSGDLSPPGA (204 aa)) are disordered. Composition is skewed to basic and acidic residues over residues 85-143 (NEDK…DSKS), 151-160 (LDEKKDLKDN), 168-177 (TNEKQTKPET), and 187-231 (ENQK…KENT). Asn-215, Asn-247, Asn-264, and Asn-270 each carry an N-linked (GlcNAc...) asparagine glycan. A compositionally biased stretch (polar residues) spans 241–252 (QEGQSKNETSGD). The tract at residues 271–291 (GSFSTQATESKNEKEAQKGSG) is disordered. A compositionally biased stretch (basic and acidic residues) spans 280-291 (SKNEKEAQKGSG). 4 N-linked (GlcNAc...) asparagine glycosylation sites follow: Asn-302, Asn-579, Asn-595, and Asn-756.

Belongs to the methyltransferase superfamily.

The protein resides in the golgi apparatus membrane. The chain is Probable methyltransferase PMT26 from Arabidopsis thaliana (Mouse-ear cress).